Reading from the N-terminus, the 360-residue chain is Peptide chain release factor 1 (360 aa).

N5-methylglutamine is present on glutamine 235.

This sequence belongs to the prokaryotic/mitochondrial release factor family. Methylated by PrmC. Methylation increases the termination efficiency of RF1.

Its subcellular location is the cytoplasm. In terms of biological role, peptide chain release factor 1 directs the termination of translation in response to the peptide chain termination codons UAG and UAA. The chain is Peptide chain release factor 1 from Paraburkholderia phymatum (strain DSM 17167 / CIP 108236 / LMG 21445 / STM815) (Burkholderia phymatum).